A 250-amino-acid polypeptide reads, in one-letter code: MIIVFMKILRSIITYFNVLLFFLILIFFLFPFYLVCKIFLIERYVVRLSFIMMRACIKISLWLAGIKIIVTGSENIPKKSNVIIMGNHIAAMDPLIFIYTFACPFVILAKHSLLRIPFVNIVLIVMGVIFVNRRSIRSAAAAEVKAIKVMREGRSIGIFPEGTRNRGGDTRVFKKGSIKMALKTGTSILPVTLYNTNNFFIKNIIFNSGLSVYIHVHPLIDVLKLSEYEKENLTSIIRDQIVKKLETIKI.

The HXXXXD motif motif lies at 88-93 (HIAAMD).

The protein belongs to the 1-acyl-sn-glycerol-3-phosphate acyltransferase family.

The enzyme catalyses a 1-acyl-sn-glycero-3-phosphate + an acyl-CoA = a 1,2-diacyl-sn-glycero-3-phosphate + CoA. It functions in the pathway phospholipid metabolism; CDP-diacylglycerol biosynthesis; CDP-diacylglycerol from sn-glycerol 3-phosphate: step 2/3. Functionally, converts lysophosphatidic acid (LPA) into phosphatidic acid by incorporating acyl moiety at the 2 position. The protein is 1-acyl-sn-glycerol-3-phosphate acyltransferase (plsC) of Borreliella burgdorferi (strain ATCC 35210 / DSM 4680 / CIP 102532 / B31) (Borrelia burgdorferi).